The following is a 95-amino-acid chain: Nucleoid-associated protein MARTH_orf159 (95 aa).

Belongs to the YbaB/EbfC family. In terms of assembly, homodimer.

The protein resides in the cytoplasm. Its subcellular location is the nucleoid. In terms of biological role, binds to DNA and alters its conformation. May be involved in regulation of gene expression, nucleoid organization and DNA protection. The chain is Nucleoid-associated protein MARTH_orf159 from Metamycoplasma arthritidis (strain 158L3-1) (Mycoplasma arthritidis).